A 295-amino-acid chain; its full sequence is Carbapenem-hydrolyzing beta-lactamase transcriptional activator (295 aa).

The 58-residue stretch at 5-62 folds into the HTH lysR-type domain; that stretch reads LPLNALRAFEASARYLNFTKAGLELHVSQAAVSQQVRTLEQMLGVALFTRVPRGLQLT. The segment at residues 22-41 is a DNA-binding region (H-T-H motif); that stretch reads FTKAGLELHVSQAAVSQQVR.

It belongs to the LysR transcriptional regulatory family.

Its function is as follows. This protein is a positive regulator of gene expression of carbapenem-hydrolyzing beta-lactamase (NmcA). The chain is Carbapenem-hydrolyzing beta-lactamase transcriptional activator (nmcR) from Enterobacter cloacae.